The primary structure comprises 99 residues: Integration host factor subunit alpha (99 aa).

Belongs to the bacterial histone-like protein family. Heterodimer of an alpha and a beta chain.

Its function is as follows. This protein is one of the two subunits of integration host factor, a specific DNA-binding protein that functions in genetic recombination as well as in transcriptional and translational control. This is Integration host factor subunit alpha from Anaeromyxobacter sp. (strain Fw109-5).